An 82-amino-acid chain; its full sequence is M-theraphotoxin-Gr1a (82 aa).

The signal sequence occupies residues 1 to 21; that stretch reads MKTSVVFVIAGLALLSVVCYA. Residues 22-46 constitute a propeptide that is removed on maturation; that stretch reads SELKEQSSVNEVLSTIFHFEQPEER. Cystine bridges form between Cys-48–Cys-63, Cys-55–Cys-69, and Cys-62–Cys-76. Position 80 is a phenylalanine amide (Phe-80).

This sequence belongs to the neurotoxin 10 (Hwtx-1) family. 52 (MTx4) subfamily. Expressed by the venom gland.

The protein localises to the secreted. In terms of biological role, this cationic hydrophobic peptide acts on a lot of different channels and has an antimicrobial activity. It blocks mechanosensitive ion channels (also named stretch-activated channels or SACs), without having effect on whole-cell voltage-sensitive currents. It also affects acetylcholine receptors (nAChRs) through interactions with membrane lipids by prolonging the closing time without affecting channel conductance or opening activity. It shows high affinity for lipid bilayers. It acts by partitioning into the membrane and perturbing the interface between the channel and the lipid bilayer without necessarily being in physical contact with the channel. It inhibits atrial fibrillation as well as the membrane motor of outer hair cells at low doses. It also binds to the voltage sensor of voltage-gated potassium channels from the archaebacterium Aeropyrum pernix (KvAP) without affecting channel gating. It also shows a low inhibition on a large spectra of sodium channels (Nav1.1/SCN1A, Nav1.2/SCN2A, Nav1.3/SCN3A, Nav1.4/SCN4A, Nav1.5/SCN5A, Nav1.6/SCN8A, Nav1.7/SCN9A) (IC(50)=7.4-14 uM), and potassium channels Kv11.1/KCNH2 and Kv11.2/KCNH6 (IC(50)=11 uM for both). It exhibits antimicrobial activities against the Gram-positive bacteria B.subtilis (MIC=0.5 uM), S.aureus (MIC=2-4 uM), and S.epidermidis (MIC=4-8 uM), and Gram-negative bacteria S.typhimurium (MIC=32.64 uM), P.aeruginosa (MIC=8-16 uM), and E.coli (MIC=8-16 uM). The sequence is that of M-theraphotoxin-Gr1a from Grammostola rosea (Chilean rose tarantula).